An 860-amino-acid chain; its full sequence is Leucine--tRNA ligase (860 aa).

A 'HIGH' region motif is present at residues proline 42–histidine 52. The 'KMSKS' region motif lies at lysine 619 to serine 623. Residue lysine 622 coordinates ATP.

The protein belongs to the class-I aminoacyl-tRNA synthetase family.

The protein resides in the cytoplasm. The catalysed reaction is tRNA(Leu) + L-leucine + ATP = L-leucyl-tRNA(Leu) + AMP + diphosphate. This Edwardsiella ictaluri (strain 93-146) protein is Leucine--tRNA ligase.